Here is a 419-residue protein sequence, read N- to C-terminus: Serine hydroxymethyltransferase (419 aa).

Residues L120 and 124-126 (GHL) each bind (6S)-5,6,7,8-tetrahydrofolate. K229 carries the N6-(pyridoxal phosphate)lysine modification.

It belongs to the SHMT family. In terms of assembly, homodimer. Pyridoxal 5'-phosphate serves as cofactor.

Its subcellular location is the cytoplasm. It carries out the reaction (6R)-5,10-methylene-5,6,7,8-tetrahydrofolate + glycine + H2O = (6S)-5,6,7,8-tetrahydrofolate + L-serine. It participates in one-carbon metabolism; tetrahydrofolate interconversion. It functions in the pathway amino-acid biosynthesis; glycine biosynthesis; glycine from L-serine: step 1/1. Catalyzes the reversible interconversion of serine and glycine with tetrahydrofolate (THF) serving as the one-carbon carrier. This reaction serves as the major source of one-carbon groups required for the biosynthesis of purines, thymidylate, methionine, and other important biomolecules. Also exhibits THF-independent aldolase activity toward beta-hydroxyamino acids, producing glycine and aldehydes, via a retro-aldol mechanism. The sequence is that of Serine hydroxymethyltransferase from Herpetosiphon aurantiacus (strain ATCC 23779 / DSM 785 / 114-95).